The primary structure comprises 1505 residues: Anaphase-promoting complex subunit 1 (1505 aa).

Belongs to the APC1 family. The APC/C complex is probably composed of at least 12 subunits: apc-2, apc-10, apc-11, cdc-26, emb-1, emb-27, emb-30, mat-1, mat-2, mat-3, such-1 and gfi-3.

Its pathway is protein modification; protein ubiquitination. Its function is as follows. Probable component of the anaphase promoting complex/cyclosome (APC/C), a cell cycle-regulated E3 ubiquitin ligase that controls progression through mitosis and the G1 phase of the cell cycle. The APC/C complex acts by mediating ubiquitination and subsequent degradation of target proteins. Developmental role in early embryogenesis and the metaphase to anaphase transition in oocyte and spermatocyte meiosis and mitosis in germ cells. Required for embryonic anterior-posterior axis formation. Plays a role in regulating the abundance of glr-1 receptors in postmitotic neurons, which may in turn control animal locomotion. Involved in regulating GABA neurotransmitter release at neuromuscular junctions in GABA motor neurons. The chain is Anaphase-promoting complex subunit 1 from Caenorhabditis elegans.